The primary structure comprises 4334 residues: Cytoplasmic dynein 2 heavy chain 1 (4334 aa).

Residues 1 to 1704 (MSSDSRKTFV…KVAMAEATFD (1704 aa)) are stem. 150–157 (LGTAVRKG) provides a ligand contact to ATP. Residues 1026–1097 (QEAKGLTAKL…AHLEEQKGNL (72 aa)) are a coiled coil. AAA stretches follow at residues 1705–1929 (YTWE…VLGI), 1996–2211 (KALA…KAFQ), 2299–2544 (GMDE…WING), and 2641–2882 (GYER…SSGS). Residues 1743-1750 (GPAGTGKT), 2034-2041 (GPSGSGKS), 2334-2341 (GPEGCGKG), and 2679-2686 (GNSGVGRR) each bind ATP. Residues 2897-3185 (QIYNRKRTQV…ISVDKAESVL (289 aa)) form a stalk region. 2 coiled-coil regions span residues 2930–2998 (LSAE…SEVQ) and 3120–3199 (ERVS…RGEK). AAA stretches follow at residues 3260 to 3492 (LSSE…TVEK) and 3701 to 3917 (MSSF…VITL).

It belongs to the dynein heavy chain family. In terms of assembly, the cytoplasmic dynein complex 2 is probably composed by a DHC1B homodimer and a number of D1BLIC light intermediate chains. Interacts with FAP133, FLA10 and LC8.

Its subcellular location is the cytoplasm. It is found in the cytoskeleton. The protein resides in the flagellum basal body. The protein localises to the cell projection. It localises to the cilium. Its subcellular location is the flagellum membrane. Functionally, may function as a motor for intraflagellar retrograde transport. Functions in flagellar biogenesis. This Chlamydomonas reinhardtii (Chlamydomonas smithii) protein is Cytoplasmic dynein 2 heavy chain 1 (DHC1B).